We begin with the raw amino-acid sequence, 493 residues long: Transcript termination protein A18 (493 aa).

A Helicase ATP-binding domain is found at Met100–Ser256. Leu113–Thr120 is a binding site for ATP. Positions Asp206 to His209 match the DESH box motif. Residues Ile309–Gly456 form the Helicase C-terminal domain.

This sequence belongs to the helicase family. Poxviruses subfamily. Interacts with G2. Might be part of a transcription complex composed at least of G2, A18, and H5.

The protein resides in the virion. DNA helicase which seems to act as a postreplicative transcription termination factor. Involved in ATP-dependent release of nascent RNA. Forms a stable complex with single-stranded DNA, and to a lesser extent RNA. This chain is Transcript termination protein A18, found in Mus musculus (Mouse).